The primary structure comprises 274 residues: 2,3,4,5-tetrahydropyridine-2,6-dicarboxylate N-succinyltransferase (274 aa).

Substrate-binding residues include Arg104 and Asp141.

This sequence belongs to the transferase hexapeptide repeat family. Homotrimer.

It localises to the cytoplasm. It catalyses the reaction (S)-2,3,4,5-tetrahydrodipicolinate + succinyl-CoA + H2O = (S)-2-succinylamino-6-oxoheptanedioate + CoA. It functions in the pathway amino-acid biosynthesis; L-lysine biosynthesis via DAP pathway; LL-2,6-diaminopimelate from (S)-tetrahydrodipicolinate (succinylase route): step 1/3. With respect to regulation, inhibited by p-(chloromercuri)benzenesulfonic acid and cobalt. This chain is 2,3,4,5-tetrahydropyridine-2,6-dicarboxylate N-succinyltransferase (dapD), found in Unknown prokaryotic organism.